The following is a 241-amino-acid chain: MMSSKPIYKRVLLKASGEALMGDQGFGIDVAVADRIASDIAEARAMGVEVGVVVGGGNIFRGVAVASKGGDRVTGDHMGMLATVINALALATSLRKLSIDTVVLSAIAMPEICESFSQRAALHHLAQGRVVIFAGGTGNPFFTTDSAAALRAAEMGAEAIFKGTQVDGIYSADPKKDPTATRFDELTHSEVLGKGLAVMDIAAVALARENHIPIIVFSIHEKGGFAQILTGGGRKTIVHDK.

Residue lysine 14–glycine 17 participates in ATP binding. Positions glycine 22 to glycine 27 are involved in allosteric activation by GTP. Position 56 (glycine 56) interacts with UMP. ATP contacts are provided by glycine 57 and arginine 61. Residues aspartate 76 and threonine 137–threonine 144 each bind UMP. ATP-binding residues include threonine 164, glutamine 165, tyrosine 170, and aspartate 173.

It belongs to the UMP kinase family. As to quaternary structure, homohexamer.

It localises to the cytoplasm. It catalyses the reaction UMP + ATP = UDP + ADP. It participates in pyrimidine metabolism; CTP biosynthesis via de novo pathway; UDP from UMP (UMPK route): step 1/1. Its activity is regulated as follows. Allosterically activated by GTP. Inhibited by UTP. Catalyzes the reversible phosphorylation of UMP to UDP. The polypeptide is Uridylate kinase (Agrobacterium fabrum (strain C58 / ATCC 33970) (Agrobacterium tumefaciens (strain C58))).